A 102-amino-acid chain; its full sequence is MQQARVRLAGVDPDDLDNICGEVQEIADKTGVKVSGPVPLPTKTLEVPSRKSPDGEGTATWEHWEMRVHKRLIDIDADERALRQLMRIQVPNDVNIEIVLED.

The disordered stretch occupies residues 34–58 (VSGPVPLPTKTLEVPSRKSPDGEGT).

The protein belongs to the universal ribosomal protein uS10 family. Part of the 30S ribosomal subunit.

Its function is as follows. Involved in the binding of tRNA to the ribosomes. This chain is Small ribosomal subunit protein uS10, found in Halobacterium salinarum (strain ATCC 29341 / DSM 671 / R1).